We begin with the raw amino-acid sequence, 200 residues long: Histone chaperone asf1b (200 aa).

Belongs to the ASF1 family. In terms of assembly, interacts with histone H3 and histone H4.

Its subcellular location is the nucleus. Histone chaperone that facilitates histone deposition and histone exchange and removal during nucleosome assembly and disassembly. The protein is Histone chaperone asf1b (asf1b) of Xenopus tropicalis (Western clawed frog).